Reading from the N-terminus, the 118-residue chain is Nucleoid-associated protein CTN_1899 (118 aa).

This sequence belongs to the YbaB/EbfC family. As to quaternary structure, homodimer.

It is found in the cytoplasm. Its subcellular location is the nucleoid. Binds to DNA and alters its conformation. May be involved in regulation of gene expression, nucleoid organization and DNA protection. This chain is Nucleoid-associated protein CTN_1899, found in Thermotoga neapolitana (strain ATCC 49049 / DSM 4359 / NBRC 107923 / NS-E).